Here is a 443-residue protein sequence, read N- to C-terminus: Probable glycine dehydrogenase (decarboxylating) subunit 1 (443 aa).

The protein belongs to the GcvP family. N-terminal subunit subfamily. The glycine cleavage system is composed of four proteins: P, T, L and H. In this organism, the P 'protein' is a heterodimer of two subunits.

It catalyses the reaction N(6)-[(R)-lipoyl]-L-lysyl-[glycine-cleavage complex H protein] + glycine + H(+) = N(6)-[(R)-S(8)-aminomethyldihydrolipoyl]-L-lysyl-[glycine-cleavage complex H protein] + CO2. Its function is as follows. The glycine cleavage system catalyzes the degradation of glycine. The P protein binds the alpha-amino group of glycine through its pyridoxal phosphate cofactor; CO(2) is released and the remaining methylamine moiety is then transferred to the lipoamide cofactor of the H protein. This is Probable glycine dehydrogenase (decarboxylating) subunit 1 from Endomicrobium trichonymphae.